Consider the following 339-residue polypeptide: Major pollen allergen Lol p 5b (339 aa).

A signal peptide spans Met1–Ala25. Repeat copies occupy residues Pro32–Thr34, Pro35–Thr37, Pro38–Ala40, Pro41–Thr43, Ala44–Thr46, Pro47–Thr49, Pro50–Thr52, Pro53–Thr55, and Pro56–Ala58. The tract at residues Pro32–Ala58 is 9 X 3 AA tandem repeats of [PA]-A-[TA]. The segment covering Ala36 to Ala58 has biased composition (low complexity). The tract at residues Ala36–Thr65 is disordered. The 2-1; truncated repeat unit spans residues Ala285 to Ala290. The tract at residues Ala285–Ala334 is 6 X 9 AA approximate tandem repeats of T-A-T-A-T-P-A-A-A. 4 tandem repeats follow at residues Thr292–Ala300, Thr301–Ala309, Tyr310–Ala318, and Thr319–Ala327. Residues Thr328–Ala334 form a 2-6; truncated repeat.

Belongs to the Poa p IX/Phl p VI allergen family. In terms of tissue distribution, pollen, starch granules.

This Lolium perenne (Perennial ryegrass) protein is Major pollen allergen Lol p 5b.